The primary structure comprises 1093 residues: Fused isobutyryl-CoA mutase (1093 aa).

The tract at residues 1–20 (MTDLSDVSRTAAAKPPAVPG) is disordered. Residues 26–156 (KVRFVTAASL…AGMITDMAQR (131 aa)) form the B12-binding domain. Residue His-39 participates in adenosylcob(III)alamin binding. The segment at 169–417 (LDTVVAGDRR…YQGLVGALGA (249 aa)) is GTPase chaperone MeaI. 219–224 (GAGKSS) is a GTP binding site. Mg(2+)-binding residues include Ser-223, Ile-248, Asp-249, and Asp-262. Arg-265 provides a ligand contact to GTP. Glu-310 and Thr-311 together coordinate Mg(2+). Residue 357–360 (NKFD) coordinates GTP. Positions 418-579 (RGMSLKPGTL…MRENVPGSFP (162 aa)) are linker. Residues Phe-587, Arg-622, Arg-728, Tyr-772, Ser-821, Arg-856, and Lys-861 each contribute to the substrate site. Positions 973 and 1092 each coordinate GTP.

Belongs to the IcmF family. As to quaternary structure, homodimer. Adenosylcob(III)alamin is required as a cofactor. Mg(2+) serves as cofactor.

It carries out the reaction 2-methylpropanoyl-CoA = butanoyl-CoA. It catalyses the reaction 3-methylbutanoyl-CoA = 2,2-dimethylpropanoyl-CoA. The catalysed reaction is GTP + H2O = GDP + phosphate + H(+). Its activity is regulated as follows. Is prone to inactivation during catalytic turnover due to the occasional loss of the 5'-deoxyadenosine moiety and formation of the inactive cob(II)alamin cofactor in its active site. The GTPase activity of IcmF powers the ejection of the inactive cofactor and requires the presence of an acceptor protein, adenosyltransferase (ATR), for receiving it. ATR, in turn, catalyzes an adenosylation reaction converting cob(II)alamin in the presence of ATP and a reductant to the active AdoCbl cofactor. The repaired cofactor is then reloaded onto IcmF in a GTPase-gated step, regenerating active enzyme. The GTPase activity of IcmF is significantly decreased in the presence of excess of AdoCbl or cob(II)alamin and is higher in the apoenzyme state, indicating that the G-domain senses the presence and identity of the cofactor in the mutase active site. Functionally, catalyzes the reversible interconversion of isobutyryl-CoA and n-butyryl-CoA, and to a much lesser extent, of pivalyl-CoA and isovaleryl-CoA, using radical chemistry. Also exhibits GTPase activity, associated with its G-protein domain (MeaI) that functions as a chaperone that assists cofactor delivery and proper holo-enzyme assembly. The G-domain of IcmF also has a role in its cofactor repair. Does not display ATPase activity. The chain is Fused isobutyryl-CoA mutase from Cupriavidus metallidurans (strain ATCC 43123 / DSM 2839 / NBRC 102507 / CH34) (Ralstonia metallidurans).